We begin with the raw amino-acid sequence, 81 residues long: Costars family protein ABRACL (81 aa).

This sequence belongs to the costars family.

This chain is Costars family protein ABRACL, found in Coturnix coturnix (Common quail).